Reading from the N-terminus, the 294-residue chain is Protein C3orf33 homolog (294 aa).

Residue alanine 2 is modified to N-acetylalanine. The chain crosses the membrane as a helical span at residues 36–53 (LVQNISTGMAIAGIMLLI). A disordered region spans residues 244-271 (KPAGADLGSTKDSYHDSRRRASGKGKDS).

It localises to the membrane. In terms of biological role, may play a role in transcription regulation. The polypeptide is Protein C3orf33 homolog (Mus musculus (Mouse)).